The chain runs to 55 residues: Large ribosomal subunit protein bL33 (55 aa).

It belongs to the bacterial ribosomal protein bL33 family.

The protein is Large ribosomal subunit protein bL33 (rpmG) of Nitrobacter hamburgensis (strain DSM 10229 / NCIMB 13809 / X14).